We begin with the raw amino-acid sequence, 465 residues long: UDP-N-acetylmuramoylalanine--D-glutamate ligase (465 aa).

Glycine 116 to threonine 122 contacts ATP.

It belongs to the MurCDEF family.

It is found in the cytoplasm. It catalyses the reaction UDP-N-acetyl-alpha-D-muramoyl-L-alanine + D-glutamate + ATP = UDP-N-acetyl-alpha-D-muramoyl-L-alanyl-D-glutamate + ADP + phosphate + H(+). The protein operates within cell wall biogenesis; peptidoglycan biosynthesis. Cell wall formation. Catalyzes the addition of glutamate to the nucleotide precursor UDP-N-acetylmuramoyl-L-alanine (UMA). The protein is UDP-N-acetylmuramoylalanine--D-glutamate ligase of Thermobifida fusca (strain YX).